We begin with the raw amino-acid sequence, 167 residues long: MPRSQRNDNFIDKTFTVVADILLKVLPTSQREKRAFAYYRDGMSAQSEGEYAEALQNYYEAMRLEVDAYDRSYILYNIGLIHTSNGEHARALEYYYQALERNPSLPSALNNIAVIYHYRGEQAIEKGQAEISSLLFDKAADYWKEAIRLAPTNYIEAQNWLKMTGRA.

TPR repeat units lie at residues 35-68, 72-105, and 120-153; these read AFAY…EVDA, SYIL…NPSL, and GEQA…APTN.

The protein belongs to the Ycf3 family.

The protein localises to the plastid. The protein resides in the chloroplast thylakoid membrane. In terms of biological role, essential for the assembly of the photosystem I (PSI) complex. May act as a chaperone-like factor to guide the assembly of the PSI subunits. The polypeptide is Photosystem I assembly protein Ycf3 (Stigeoclonium helveticum (Green alga)).